Here is a 316-residue protein sequence, read N- to C-terminus: Ribosomal RNA small subunit methyltransferase H (316 aa).

S-adenosyl-L-methionine contacts are provided by residues 35–37 (GGH), D55, F79, D101, and Q108.

The protein belongs to the methyltransferase superfamily. RsmH family.

The protein localises to the cytoplasm. The catalysed reaction is cytidine(1402) in 16S rRNA + S-adenosyl-L-methionine = N(4)-methylcytidine(1402) in 16S rRNA + S-adenosyl-L-homocysteine + H(+). In terms of biological role, specifically methylates the N4 position of cytidine in position 1402 (C1402) of 16S rRNA. The protein is Ribosomal RNA small subunit methyltransferase H of Vibrio proteolyticus (Aeromonas proteolytica).